Reading from the N-terminus, the 249-residue chain is tRNA pseudouridine synthase A (249 aa).

The active-site Nucleophile is the aspartate 52. Tyrosine 110 contributes to the substrate binding site.

Belongs to the tRNA pseudouridine synthase TruA family. In terms of assembly, homodimer.

The catalysed reaction is uridine(38/39/40) in tRNA = pseudouridine(38/39/40) in tRNA. Functionally, formation of pseudouridine at positions 38, 39 and 40 in the anticodon stem and loop of transfer RNAs. This is tRNA pseudouridine synthase A from Exiguobacterium sibiricum (strain DSM 17290 / CCUG 55495 / CIP 109462 / JCM 13490 / 255-15).